The sequence spans 626 residues: Chaperone protein HtpG (626 aa).

The segment at 1–332 is a; substrate-binding; it reads MTNNDTPGMR…TEDLPLNVSR (332 aa). The b stretch occupies residues 333-546; that stretch reads EVVQSSKVMA…KDSLDSSMEK (214 aa). The c stretch occupies residues 547-626; it reads MMKMMHAEMP…ELIEAATMSR (80 aa).

This sequence belongs to the heat shock protein 90 family. As to quaternary structure, homodimer.

The protein resides in the cytoplasm. Molecular chaperone. Has ATPase activity. The polypeptide is Chaperone protein HtpG (Chlorobium phaeobacteroides (strain DSM 266 / SMG 266 / 2430)).